Here is a 183-residue protein sequence, read N- to C-terminus: Large ribosomal subunit protein bL17 (183 aa).

The segment covering 130–150 (GTKFAKDEKAKAEATEAKAEE) has biased composition (basic and acidic residues). The tract at residues 130–183 (GTKFAKDEKAKAEATEAKAEETTETTESTEAESTEAPAEEAKAEDTAAEKKDES) is disordered. Acidic residues predominate over residues 151–162 (TTETTESTEAES). Residues 168–183 (EEAKAEDTAAEKKDES) are compositionally biased toward basic and acidic residues.

The protein belongs to the bacterial ribosomal protein bL17 family. Part of the 50S ribosomal subunit. Contacts protein L32.

The chain is Large ribosomal subunit protein bL17 from Saccharopolyspora erythraea (strain ATCC 11635 / DSM 40517 / JCM 4748 / NBRC 13426 / NCIMB 8594 / NRRL 2338).